A 1319-amino-acid polypeptide reads, in one-letter code: Girdin homolog (1319 aa).

The Calponin-homology (CH) domain occupies 6–118; sequence ENWSHPLAFW…KLLLLLLGCA (113 aa). Coiled coils occupy residues 141–173, 218–690, and 732–1096; these read ELAA…TDEV, TSEL…ADLI, and KRER…KKST. The interval 166–222 is disordered; that stretch reads KMKETDEVGGGGGSIEDVDSDDMESSTTSSSNGEIAIKQQDQSFLMSRSTSPTSELR. The span at 204 to 222 shows a compositional bias: polar residues; sequence QQDQSFLMSRSTSPTSELR. 2 disordered regions span residues 1112-1236 and 1289-1308; these read INRR…SPAH and NVNL…LKPN. Positions 1118-1131 are enriched in polar residues; that stretch reads TSNGGSTTEDSSVY.

Belongs to the CCDC88 family. Expressed in AQR and PQR gas-sensing neurons in hermaphrodites (at protein level).

The protein localises to the cytoplasm. The protein resides in the cytoskeleton. Its subcellular location is the cilium basal body. It is found in the microtubule organizing center. It localises to the centrosome. The protein localises to the centriole. Scaffolding protein that plays a role in ciliogenesis, cilium positioning and dendrite anchoring in sensory amphid neurons including AWB, AWA, AWC, ADL and ASI, the phasmid neurons PHA and PHB and the gas sensing neurons AQR, PQR, URX and BAG. Its role in cilium positioning may be through regulation of the localization of cell adhesion proteins such as the apical junction protein ajm-1, and the ciliary scaffolding protein Rootletin/che-10. Plays a more prominent role in regulating dendrite morphogenesis in AQR than in PQR neurons. Regulates localization of hmr-1 to the distal AQR dendrite. During embryonic elongation, required for the anchoring of URX and BAG dendrites to the presumptive nose. The sequence is that of Girdin homolog from Caenorhabditis elegans.